The sequence spans 244 residues: tRNA (guanine-N(7)-)-methyltransferase (244 aa).

The S-adenosyl-L-methionine site is built by glutamate 75, glutamate 100, aspartate 127, and aspartate 150. Aspartate 150 is an active-site residue. Residues lysine 154, aspartate 186, and 223-226 each bind substrate; that span reads TRFE.

It belongs to the class I-like SAM-binding methyltransferase superfamily. TrmB family.

It carries out the reaction guanosine(46) in tRNA + S-adenosyl-L-methionine = N(7)-methylguanosine(46) in tRNA + S-adenosyl-L-homocysteine. Its pathway is tRNA modification; N(7)-methylguanine-tRNA biosynthesis. Functionally, catalyzes the formation of N(7)-methylguanine at position 46 (m7G46) in tRNA. In Xylella fastidiosa (strain M23), this protein is tRNA (guanine-N(7)-)-methyltransferase.